The primary structure comprises 357 residues: Peptide chain release factor 1 (357 aa).

Glutamine 232 carries the N5-methylglutamine modification.

It belongs to the prokaryotic/mitochondrial release factor family. Post-translationally, methylated by PrmC. Methylation increases the termination efficiency of RF1.

It localises to the cytoplasm. In terms of biological role, peptide chain release factor 1 directs the termination of translation in response to the peptide chain termination codons UAG and UAA. The polypeptide is Peptide chain release factor 1 (Nitratidesulfovibrio vulgaris (strain ATCC 29579 / DSM 644 / CCUG 34227 / NCIMB 8303 / VKM B-1760 / Hildenborough) (Desulfovibrio vulgaris)).